The primary structure comprises 258 residues: Type III pantothenate kinase (258 aa).

6–13 (DIGNTNTV) is an ATP binding site. Residues Y100 and 107–110 (GADR) each bind substrate. The active-site Proton acceptor is D109. D129 provides a ligand contact to K(+). T132 lines the ATP pocket. T185 is a binding site for substrate.

It belongs to the type III pantothenate kinase family. Homodimer. It depends on NH4(+) as a cofactor. K(+) is required as a cofactor.

Its subcellular location is the cytoplasm. It carries out the reaction (R)-pantothenate + ATP = (R)-4'-phosphopantothenate + ADP + H(+). Its pathway is cofactor biosynthesis; coenzyme A biosynthesis; CoA from (R)-pantothenate: step 1/5. Catalyzes the phosphorylation of pantothenate (Pan), the first step in CoA biosynthesis. This Syntrophobacter fumaroxidans (strain DSM 10017 / MPOB) protein is Type III pantothenate kinase.